Reading from the N-terminus, the 209-residue chain is Orotate phosphoribosyltransferase (209 aa).

5-phospho-alpha-D-ribose 1-diphosphate contacts are provided by residues Arg96, Lys100, His102, and 122–130; that span reads EDLISTGGS. Ser126 contributes to the orotate binding site.

It belongs to the purine/pyrimidine phosphoribosyltransferase family. PyrE subfamily. As to quaternary structure, homodimer. Mg(2+) is required as a cofactor.

The enzyme catalyses orotidine 5'-phosphate + diphosphate = orotate + 5-phospho-alpha-D-ribose 1-diphosphate. It functions in the pathway pyrimidine metabolism; UMP biosynthesis via de novo pathway; UMP from orotate: step 1/2. Catalyzes the transfer of a ribosyl phosphate group from 5-phosphoribose 1-diphosphate to orotate, leading to the formation of orotidine monophosphate (OMP). The polypeptide is Orotate phosphoribosyltransferase (Cytophaga hutchinsonii (strain ATCC 33406 / DSM 1761 / CIP 103989 / NBRC 15051 / NCIMB 9469 / D465)).